Consider the following 285-residue polypeptide: 2-dehydro-3-deoxyphosphooctonate aldolase (285 aa).

Belongs to the KdsA family.

The protein resides in the cytoplasm. It catalyses the reaction D-arabinose 5-phosphate + phosphoenolpyruvate + H2O = 3-deoxy-alpha-D-manno-2-octulosonate-8-phosphate + phosphate. It participates in carbohydrate biosynthesis; 3-deoxy-D-manno-octulosonate biosynthesis; 3-deoxy-D-manno-octulosonate from D-ribulose 5-phosphate: step 2/3. The protein operates within bacterial outer membrane biogenesis; lipopolysaccharide biosynthesis. This is 2-dehydro-3-deoxyphosphooctonate aldolase from Acinetobacter baylyi (strain ATCC 33305 / BD413 / ADP1).